The primary structure comprises 281 residues: Elongation factor Ts (281 aa).

An involved in Mg(2+) ion dislocation from EF-Tu region spans residues 80–83 (TDFV).

It belongs to the EF-Ts family.

The protein localises to the cytoplasm. Associates with the EF-Tu.GDP complex and induces the exchange of GDP to GTP. It remains bound to the aminoacyl-tRNA.EF-Tu.GTP complex up to the GTP hydrolysis stage on the ribosome. The chain is Elongation factor Ts from Vibrio campbellii (strain ATCC BAA-1116).